The chain runs to 416 residues: Vacuole membrane protein KMS1 (416 aa).

N-acetylglycine is present on G2. At 2–60 (GSAGVASSSSDVAISALREKHEKEVENLTLTTQPLNTLKLFVEATIQYIKRSISYLLAH) the chain is on the cytoplasmic side. The chain crosses the membrane as a helical span at residues 61–81 (GGWFILITTLLVVSGGLLVTV). Residues 82-101 (DGPHGKHVEEVLEYVRYGLW) lie on the Lumenal side of the membrane. Residues 102–124 (WIALGVASSIGLGSGLHTFVLYL) traverse the membrane as a helical segment. Topologically, residues 125-257 (GPHIALFTLK…WLLTHSQHLN (133 aa)) are cytoplasmic. A helical transmembrane segment spans residues 258-278 (FFTVLVLASVPNPLFDLAGIM). Topologically, residues 279–289 (CGQFGIPFWEF) are lumenal. The chain crosses the membrane as a helical span at residues 290-312 (FLATLIGKAIIKTHIQTIFIICV). Over 313-323 (CNNQLLDWMEN) the chain is Cytoplasmic. A helical membrane pass occupies residues 324–344 (ELIWILSHVPGLASMLPGLTA). Residues 345-372 (KLHAMKEKYIDAPSPVPSHIKVKKWDFS) lie on the Lumenal side of the membrane. The helical transmembrane segment at 373 to 393 (FASIWNGIVWLMLLNFFVKIV) threads the bilayer. The Cytoplasmic segment spans residues 394 to 416 (TATAQRHLKKKQEKEMATLTHSD).

This sequence belongs to the VMP1 family.

It is found in the endoplasmic reticulum membrane. Its function is as follows. Involved in the early secretory pathway. Required for the correct export of secretory products from the endoplasmic reticulum (ER) and involved in the maintenance of ER integrity. This is Vacuole membrane protein KMS1 from Arabidopsis thaliana (Mouse-ear cress).